Consider the following 446-residue polypeptide: Amino-acid acetyltransferase (446 aa).

The region spanning 299 to 438 (EQVRDAEIDD…QKLYNFQRKS (140 aa)) is the N-acetyltransferase domain.

This sequence belongs to the acetyltransferase family. ArgA subfamily.

The protein localises to the cytoplasm. The enzyme catalyses L-glutamate + acetyl-CoA = N-acetyl-L-glutamate + CoA + H(+). It functions in the pathway amino-acid biosynthesis; L-arginine biosynthesis; N(2)-acetyl-L-ornithine from L-glutamate: step 1/4. This is Amino-acid acetyltransferase from Aliivibrio fischeri (strain ATCC 700601 / ES114) (Vibrio fischeri).